We begin with the raw amino-acid sequence, 404 residues long: Argininosuccinate synthase (404 aa).

Residues 10 to 18 (AYSGGLDTS) and alanine 37 contribute to the ATP site. The L-citrulline site is built by tyrosine 90 and serine 95. Glycine 120 is an ATP binding site. L-aspartate-binding residues include threonine 122, asparagine 126, and aspartate 127. L-citrulline is bound at residue asparagine 126. Arginine 130, serine 181, serine 190, glutamate 266, and tyrosine 278 together coordinate L-citrulline. Positions 173 to 200 (DKRGESPFSTDANLLHTSSEGKVLEDPW) are disordered. Polar residues predominate over residues 179–192 (PFSTDANLLHTSSE).

Belongs to the argininosuccinate synthase family. Type 1 subfamily. Homotetramer.

The protein resides in the cytoplasm. The catalysed reaction is L-citrulline + L-aspartate + ATP = 2-(N(omega)-L-arginino)succinate + AMP + diphosphate + H(+). It functions in the pathway amino-acid biosynthesis; L-arginine biosynthesis; L-arginine from L-ornithine and carbamoyl phosphate: step 2/3. This is Argininosuccinate synthase from Novosphingobium aromaticivorans (strain ATCC 700278 / DSM 12444 / CCUG 56034 / CIP 105152 / NBRC 16084 / F199).